The sequence spans 318 residues: D-alanine--D-alanine ligase (318 aa).

Positions K101 to E307 constitute an ATP-grasp domain. An ATP-binding site is contributed by C135 to T190. Positions 261, 274, and 276 each coordinate Mg(2+).

It belongs to the D-alanine--D-alanine ligase family. Mg(2+) serves as cofactor. Mn(2+) is required as a cofactor.

It is found in the cytoplasm. The enzyme catalyses 2 D-alanine + ATP = D-alanyl-D-alanine + ADP + phosphate + H(+). The protein operates within cell wall biogenesis; peptidoglycan biosynthesis. Its function is as follows. Cell wall formation. This chain is D-alanine--D-alanine ligase, found in Pelotomaculum thermopropionicum (strain DSM 13744 / JCM 10971 / SI).